We begin with the raw amino-acid sequence, 338 residues long: Cytochrome bd ubiquinol oxidase subunit 2 (338 aa).

9 consecutive transmembrane segments (helical) span residues 7-27, 50-70, 75-95, 119-139, 163-183, 196-216, 227-247, 256-276, and 306-326; these read LWFILVAVLFVGFFFLEGFDF, IGPFWDANEVWLLTGAGAIFA, WYATMLSGYYIPFVIVLLALM, VVFFGSLIPPFVLGVLFTTLF, ILGGVTVTLLCFQHGLMFITL, MAQKIMGVVFVAVLAFAALSA, EITIPLAVLIVICFMLAAVFI, FGMTGAGLALTVGMIFISLFP, and IAALTLLPFVIGSQIWSYYVF.

Belongs to the cytochrome ubiquinol oxidase subunit 2 family. In terms of assembly, heterodimer of subunits I and II. Requires heme b as cofactor. The cofactor is heme d cis-diol.

The protein localises to the cell membrane. It carries out the reaction 2 a ubiquinol + O2(in) + 4 H(+)(in) = 2 a ubiquinone + 2 H2O(in) + 4 H(+)(out). This is Cytochrome bd ubiquinol oxidase subunit 2 (cydB) from Bacillus subtilis (strain 168).